The sequence spans 103 residues: Nucleoid-associated protein NIS_0256 (103 aa).

The protein belongs to the YbaB/EbfC family. Homodimer.

Its subcellular location is the cytoplasm. It is found in the nucleoid. Its function is as follows. Binds to DNA and alters its conformation. May be involved in regulation of gene expression, nucleoid organization and DNA protection. The polypeptide is Nucleoid-associated protein NIS_0256 (Nitratiruptor sp. (strain SB155-2)).